The following is a 233-amino-acid chain: Phosphoribosylformylglycinamidine synthase subunit PurQ (233 aa).

The 231-residue stretch at 3 to 233 folds into the Glutamine amidotransferase type-1 domain; that stretch reads SAVLVFPGIN…GLVAHLERAA (231 aa). C87 functions as the Nucleophile in the catalytic mechanism. Active-site residues include H204 and E206.

In terms of assembly, part of the FGAM synthase complex composed of 1 PurL, 1 PurQ and 2 PurS subunits.

Its subcellular location is the cytoplasm. The catalysed reaction is N(2)-formyl-N(1)-(5-phospho-beta-D-ribosyl)glycinamide + L-glutamine + ATP + H2O = 2-formamido-N(1)-(5-O-phospho-beta-D-ribosyl)acetamidine + L-glutamate + ADP + phosphate + H(+). The enzyme catalyses L-glutamine + H2O = L-glutamate + NH4(+). It functions in the pathway purine metabolism; IMP biosynthesis via de novo pathway; 5-amino-1-(5-phospho-D-ribosyl)imidazole from N(2)-formyl-N(1)-(5-phospho-D-ribosyl)glycinamide: step 1/2. Part of the phosphoribosylformylglycinamidine synthase complex involved in the purines biosynthetic pathway. Catalyzes the ATP-dependent conversion of formylglycinamide ribonucleotide (FGAR) and glutamine to yield formylglycinamidine ribonucleotide (FGAM) and glutamate. The FGAM synthase complex is composed of three subunits. PurQ produces an ammonia molecule by converting glutamine to glutamate. PurL transfers the ammonia molecule to FGAR to form FGAM in an ATP-dependent manner. PurS interacts with PurQ and PurL and is thought to assist in the transfer of the ammonia molecule from PurQ to PurL. The chain is Phosphoribosylformylglycinamidine synthase subunit PurQ from Nitrobacter winogradskyi (strain ATCC 25391 / DSM 10237 / CIP 104748 / NCIMB 11846 / Nb-255).